Here is a 160-residue protein sequence, read N- to C-terminus: Urease accessory protein UreE (160 aa).

The protein belongs to the UreE family.

Its subcellular location is the cytoplasm. Its function is as follows. Involved in urease metallocenter assembly. Binds nickel. Probably functions as a nickel donor during metallocenter assembly. The chain is Urease accessory protein UreE from Acinetobacter baumannii (strain ACICU).